Reading from the N-terminus, the 485-residue chain is Argininosuccinate lyase (485 aa).

Belongs to the lyase 1 family. Argininosuccinate lyase subfamily.

The protein localises to the cytoplasm. It carries out the reaction 2-(N(omega)-L-arginino)succinate = fumarate + L-arginine. Its pathway is amino-acid biosynthesis; L-arginine biosynthesis; L-arginine from L-ornithine and carbamoyl phosphate: step 3/3. The chain is Argininosuccinate lyase from Nitrosopumilus maritimus (strain SCM1).